A 306-amino-acid polypeptide reads, in one-letter code: Acyl transferase (306 aa).

Residues serine 117, aspartate 214, and histidine 244 each act as charge relay system in the active site.

It belongs to the LuxD family.

It participates in lipid metabolism; fatty acid reduction for biolumincescence. Functionally, acyl transferase is part of the fatty acid reductase system required for aldehyde biosynthesis; it produces fatty acids for the luminescent reaction. This chain is Acyl transferase, found in Photobacterium phosphoreum.